The primary structure comprises 405 residues: MDGTTTTLPLAGIRVIDAATVIAAPFCATLLGEFGADVLKVEHPIGGDALRRFGTPTARGDTLTWLSESRNKRSVTLNLQHPEGARVFKELIAHSDVLCENFRPGTLEKWGLGWDVLSKINPRLIMLRVTGYGQTGPYRDRPGFARIAHAVGGIAYLAGMPKGTPVTPGSTTLADYMTGLYGCIGVLLALRHREQTGRGQYIDAALYESVFRCSDELVPAYGMYRKVRERHGSHYNEFACPHGHFQTKDGKWVAISCATDKLFARLANAMGRPELASSSVYGDQKVRLAHASDVNEIVRDWCSSLTRAEVLERCYATATPAAPLNDIADFFGDRHVHARRNLVAIDAEDLGETLIMPNVVPKLSETPGSIRSLGPKLGEHTEEVLKEILGMCDEQINDLRSKRVI.

The active-site Nucleophile is D175.

This sequence belongs to the CoA-transferase III family. As to quaternary structure, forms a large complex composed of six heterodimers (alpha, beta).

The catalysed reaction is succinyl-CoA + (S)-malate = (S)-malyl-CoA + succinate. It catalyses the reaction (3S)-citramalate + succinyl-CoA = (3S)-citramalyl-CoA + succinate. In terms of biological role, involved in the 3-hydroxypropionate cycle used for autotrophic carbon dioxide fixation. Catalyzes the transfer of CoA moiety from succinyl-CoA to L-malate to yield L-malyl-CoA. The polypeptide is Succinyl-CoA--L-malate CoA-transferase beta subunit (smtB) (Chloroflexus aurantiacus (strain ATCC 29366 / DSM 635 / J-10-fl)).